We begin with the raw amino-acid sequence, 444 residues long: Light-independent protochlorophyllide reductase subunit N (444 aa).

[4Fe-4S] cluster is bound by residues Cys-36, Cys-61, and Cys-118.

This sequence belongs to the BchN/ChlN family. In terms of assembly, protochlorophyllide reductase is composed of three subunits; BchL, BchN and BchB. Forms a heterotetramer of two BchB and two BchN subunits. The cofactor is [4Fe-4S] cluster.

The enzyme catalyses chlorophyllide a + oxidized 2[4Fe-4S]-[ferredoxin] + 2 ADP + 2 phosphate = protochlorophyllide a + reduced 2[4Fe-4S]-[ferredoxin] + 2 ATP + 2 H2O. The protein operates within porphyrin-containing compound metabolism; bacteriochlorophyll biosynthesis (light-independent). Functionally, component of the dark-operative protochlorophyllide reductase (DPOR) that uses Mg-ATP and reduced ferredoxin to reduce ring D of protochlorophyllide (Pchlide) to form chlorophyllide a (Chlide). This reaction is light-independent. The NB-protein (BchN-BchB) is the catalytic component of the complex. The polypeptide is Light-independent protochlorophyllide reductase subunit N (Chloroflexus aurantiacus (strain ATCC 29366 / DSM 635 / J-10-fl)).